The chain runs to 380 residues: Flap endonuclease 1 (380 aa).

Positions 1–104 (MGIQGLAKLI…GELAKRSERR (104 aa)) are N-domain. Arginine 19 is subject to Symmetric dimethylarginine; by PRMT5. Aspartate 34 is a binding site for Mg(2+). Positions 47 and 70 each coordinate DNA. At lysine 80 the chain carries N6-acetyllysine. Aspartate 86 contacts Mg(2+). Arginine 100 and arginine 104 each carry symmetric dimethylarginine; by PRMT5. The segment at 122–253 (EVEKFTKRLV…KRAVDLIQKH (132 aa)) is I-domain. Positions 158, 160, 179, and 181 each coordinate Mg(2+). Glutamate 158 is a DNA binding site. Serine 187 carries the post-translational modification Phosphoserine; by CDK2. The residue at position 192 (arginine 192) is a Symmetric dimethylarginine; by PRMT5. Residue serine 197 is modified to Phosphoserine. The DNA site is built by glycine 231 and aspartate 233. Aspartate 233 contacts Mg(2+). A phosphoserine mark is found at serine 255, serine 293, and serine 335. The residue at position 336 (threonine 336) is a Phosphothreonine. The interval 336-344 (TQGRLDDFF) is interaction with PCNA. Residues 349–380 (SLSSAKRKEPEPKGAAKKKQRLGPAGKFKRGK) are disordered. N6-acetyllysine is present on residues lysine 354, lysine 375, lysine 377, and lysine 380. Over residues 363 to 380 (AAKKKQRLGPAGKFKRGK) the composition is skewed to basic residues.

This sequence belongs to the XPG/RAD2 endonuclease family. FEN1 subfamily. Interacts with PCNA. Three molecules of FEN1 bind to one PCNA trimer with each molecule binding to one PCNA monomer. PCNA stimulates the nuclease activity without altering cleavage specificity. The C-terminal domain binds EP300; can bind simultaneously to both PCNA and EP300. Interacts with DDX11; this interaction is direct and increases flap endonuclease activity of FEN1. Interacts with WDR4; regulating its endonuclease activity. Interacts with POLB. It depends on Mg(2+) as a cofactor. Post-translationally, acetylated by EP300. Acetylation inhibits both endonuclease and exonuclease activity. Acetylation also reduces DNA-binding activity but does not affect interaction with PCNA or EP300. In terms of processing, phosphorylation upon DNA damage induces relocalization to the nuclear plasma. Phosphorylation at Ser-187 by CDK2 occurs during late S-phase and results in dissociation from PCNA. Methylation at Arg-192 by PRMT5 impedes Ser-187 phosphorylation and increases interaction with PCNA.

The protein resides in the nucleus. The protein localises to the nucleolus. Its subcellular location is the nucleoplasm. It is found in the mitochondrion. Functionally, structure-specific nuclease with 5'-flap endonuclease and 5'-3' exonuclease activities involved in DNA replication and repair. During DNA replication, cleaves the 5'-overhanging flap structure that is generated by displacement synthesis when DNA polymerase encounters the 5'-end of a downstream Okazaki fragment. It enters the flap from the 5'-end and then tracks to cleave the flap base, leaving a nick for ligation. Also involved in the long patch base excision repair (LP-BER) pathway, by cleaving within the apurinic/apyrimidinic (AP) site-terminated flap. Acts as a genome stabilization factor that prevents flaps from equilibrating into structures that lead to duplications and deletions. Also possesses 5'-3' exonuclease activity on nicked or gapped double-stranded DNA, and exhibits RNase H activity. Also involved in replication and repair of rDNA and in repairing mitochondrial DNA. The sequence is that of Flap endonuclease 1 from Ovis aries (Sheep).